The primary structure comprises 212 residues: Histone H1.2 (212 aa).

The span at 1-17 shows a compositional bias: low complexity; sequence MSEAAPAAPAAAPPAEK. Residues 1 to 41 are disordered; it reads MSEAAPAAPAAAPPAEKAPAKKKAAKKPAGVRRKASGPPVS. An N-acetylserine modification is found at serine 2. Residue serine 2 is modified to Phosphoserine. Lysine 17 carries the N6-acetyllysine modification. A compositionally biased stretch (basic residues) spans 20–35; the sequence is AKKKAAKKPAGVRRKA. Lysine 23, lysine 26, and lysine 27 each carry N6-(2-hydroxyisobutyryl)lysine. Residue lysine 34 is modified to N6-(beta-hydroxybutyryl)lysine; alternate. Position 34 is an N6-crotonyllysine; alternate (lysine 34). Lysine 34 carries the N6-methyllysine; alternate modification. An H15 domain is found at 36-109; that stretch reads SGPPVSELIT…GASGSFKLNK (74 aa). At lysine 46 the chain carries N6-(2-hydroxyisobutyryl)lysine. An N6-(beta-hydroxybutyryl)lysine; alternate modification is found at lysine 52. N6-(2-hydroxyisobutyryl)lysine; alternate is present on lysine 52. The residue at position 54 (arginine 54) is a Citrulline. Lysine 63 bears the N6-(2-hydroxyisobutyryl)lysine mark. At lysine 64 the chain carries N6-(beta-hydroxybutyryl)lysine; alternate. Lysine 64 bears the N6-crotonyllysine; alternate mark. An N6-(2-hydroxyisobutyryl)lysine; alternate modification is found at lysine 64. N6-(2-hydroxyisobutyryl)lysine occurs at positions 75 and 81. Lysine 85 and lysine 90 each carry N6-(beta-hydroxybutyryl)lysine; alternate. N6-crotonyllysine; alternate is present on residues lysine 85, lysine 90, and lysine 97. Residues lysine 85, lysine 90, and lysine 97 each carry the N6-(2-hydroxyisobutyryl)lysine; alternate modification. The residue at position 97 (lysine 97) is an N6-succinyllysine; alternate. A disordered region spans residues 98-212; that stretch reads GTGASGSFKL…KAKKVAAKKK (115 aa). Position 104 is a phosphoserine; by PKC (serine 104). Lysine 106 is subject to N6-(beta-hydroxybutyryl)lysine. N6-(2-hydroxyisobutyryl)lysine occurs at positions 110, 117, 121, 129, and 136. Positions 121–148 are enriched in low complexity; it reads KKAGAAKAKKPAGAAKKPKKATGAATPK. Residue threonine 146 is modified to Phosphothreonine. The residue at position 148 (lysine 148) is an N6-(2-hydroxyisobutyryl)lysine. Basic residues predominate over residues 149-160; that stretch reads KAAKKTPKKAKK. Residues lysine 159 and lysine 168 each carry the N6-crotonyllysine; alternate modification. Residues lysine 159 and lysine 168 each carry the N6-(2-hydroxyisobutyryl)lysine; alternate modification. Residues 169–212 show a composition bias toward basic residues; sequence KVAKSPKKAKVTKPKKVKSASKAVKPKAAKPKVAKAKKVAAKKK. At lysine 186 the chain carries N6-methyllysine; by EHMT1 and EHMT2. Residue serine 187 is modified to ADP-ribosylserine. Position 212 is an N6-(2-hydroxyisobutyryl)lysine (lysine 212).

Belongs to the histone H1/H5 family. In terms of assembly, interacts with TSC22D1 isoform 2. H1 histones are progressively phosphorylated during the cell cycle, becoming maximally phosphorylated during late G2 phase and M phase, and being dephosphorylated sharply thereafter. In terms of processing, crotonylation (Kcr) is specifically present in male germ cells and marks testis-specific genes in post-meiotic cells, including X-linked genes that escape sex chromosome inactivation in haploid cells. Crotonylation marks active promoters and enhancers and confers resistance to transcriptional repressors. It is also associated with post-meiotically activated genes on autosomes. Post-translationally, ADP-ribosylated on Ser-187 in response to DNA damage. Citrullination at Arg-54 (H1R54ci) by PADI4 takes place within the DNA-binding site of H1 and results in its displacement from chromatin and global chromatin decondensation, thereby promoting pluripotency and stem cell maintenance. In terms of processing, hydroxybutyrylation of histones is induced by starvation.

The protein resides in the nucleus. Its subcellular location is the chromosome. Its function is as follows. Histone H1 protein binds to linker DNA between nucleosomes forming the macromolecular structure known as the chromatin fiber. Histones H1 are necessary for the condensation of nucleosome chains into higher-order structured fibers. Also acts as a regulator of individual gene transcription through chromatin remodeling, nucleosome spacing and DNA methylation. The chain is Histone H1.2 from Mus musculus (Mouse).